A 127-amino-acid chain; its full sequence is Small ribosomal subunit protein bS6 (127 aa).

Residues 101–127 (PMMKEEKARDLLQGAKADAPAEQPAAA) are disordered. A compositionally biased stretch (low complexity) spans 115-127 (AKADAPAEQPAAA).

Belongs to the bacterial ribosomal protein bS6 family.

Binds together with bS18 to 16S ribosomal RNA. The protein is Small ribosomal subunit protein bS6 of Thiobacillus denitrificans (strain ATCC 25259 / T1).